Reading from the N-terminus, the 154-residue chain is General odorant-binding protein 83a (154 aa).

The signal sequence occupies residues 1–33 (MALNGFGRRVSASVLLIALSLLSGALILPPAAA). Disulfide bonds link C55–C86, C82–C133, and C124–C142.

Belongs to the PBP/GOBP family. In the ventrolateral region of the antenna, expressed in two distinct types of olfactory hairs: in most sensilla trichodea and in a subset of the small sensilla basiconica (at protein level).

It localises to the secreted. This is General odorant-binding protein 83a (Obp83a) from Drosophila melanogaster (Fruit fly).